The chain runs to 652 residues: MSQIHKHTIPANIADRCLINPQQYEAMYQQSINAPDTFWGEQGKILDWITPYQKVKNTSFAPGNVSIKWYEDGTLNLAANCLDRHLQENGDRTAIIWEGDDASQSKHISYKELHRDVCRFANTLLELGIKKGDVVAIYMPMVPEAAVAMLACARIGAVHSVIFGGFSPEAVAGRIIDSSSRLVITSDEGVRAGRSIPLKKNVDDALKNPNVTSVEHVVVLKRTGGKIDWQEGRDLWWHDLVEQASAQHQAEEMNAEDPLFILYTSGSTGKPKGVLHTTGGYLVYAALTFKYVFDYHPGDIYWCTADVGWVTGHSYLLYGPLACGATTLMFEGVPNWPTPARMAQVVDKHQVNILYTAPTAIRALMAEGDKAIEGTDRSSLRILGSVGEPINPEAWEWYWKKIGNEKCPVVDTWWQTETGGFMITPLPGATELKAGSATRPFFGVQPALVDNEGNPLEGATEGSLVITDSWPGQARTLFGDHERFEQTYFSTFKNMYFSGDGARRDEDGYYWITGRVDDVLNVSGHRLGTAEIESALVAHPKIAEAAVVGIPHNIKGQAIYAYVTLNHGEEPSPELYAEVRNWVRKEIGPLATPDVLHWTDSLPKTRSGKIMRRILRKIAAGDTSNLGDTSTLADPGVVEKLLEEKQAIAMPS.

CoA contacts are provided by residues 191–194, Thr311, and Asn335; that span reads RAGR. ATP contacts are provided by residues 387-389, 411-416, Asp500, and Arg515; these read GEP and DTWWQT. Ser523 is a CoA binding site. Arg526 lines the ATP pocket. 3 residues coordinate Mg(2+): Val537, His539, and Ile542. Arg584 contacts CoA. Lys609 carries the N6-acetyllysine modification.

The protein belongs to the ATP-dependent AMP-binding enzyme family. The cofactor is Mg(2+). Post-translationally, acetylated. Deacetylation by the SIR2-homolog deacetylase activates the enzyme.

The enzyme catalyses acetate + ATP + CoA = acetyl-CoA + AMP + diphosphate. In terms of biological role, catalyzes the conversion of acetate into acetyl-CoA (AcCoA), an essential intermediate at the junction of anabolic and catabolic pathways. Acs undergoes a two-step reaction. In the first half reaction, Acs combines acetate with ATP to form acetyl-adenylate (AcAMP) intermediate. In the second half reaction, it can then transfer the acetyl group from AcAMP to the sulfhydryl group of CoA, forming the product AcCoA. Functionally, enables the cell to use acetate during aerobic growth to generate energy via the TCA cycle, and biosynthetic compounds via the glyoxylate shunt. Acetylates CheY, the response regulator involved in flagellar movement and chemotaxis. This chain is Acetyl-coenzyme A synthetase, found in Escherichia coli O6:H1 (strain CFT073 / ATCC 700928 / UPEC).